Here is a 159-residue protein sequence, read N- to C-terminus: Large ribosomal subunit protein mL43 (159 aa).

The segment at 123–159 (SPSIQGQWHPFTNKPTALGGLRPREVQNPAPTQRPAQ) is disordered.

It belongs to the mitochondrion-specific ribosomal protein mL43 family. In terms of assembly, component of the mitochondrial ribosome large subunit (39S) which comprises a 16S rRNA and about 50 distinct proteins.

It is found in the mitochondrion. The chain is Large ribosomal subunit protein mL43 (MRPL43) from Bos taurus (Bovine).